The following is a 142-amino-acid chain: Putative regulator of rDNA transcription protein 16 (142 aa).

The next 3 membrane-spanning stretches (helical) occupy residues 19-39 (ILLT…VMVA), 84-104 (FLLF…AIFL), and 111-131 (SIFI…GLCH).

It is found in the membrane. In terms of biological role, identified in a screen for mutants with decreased levels of rDNA transcription. This is Putative regulator of rDNA transcription protein 16 (RRT16) from Saccharomyces cerevisiae (strain ATCC 204508 / S288c) (Baker's yeast).